The primary structure comprises 465 residues: GTPase Der (465 aa).

EngA-type G domains lie at 27–190 and 202–375; these read PVLA…PEAP and RRIA…AGWE. Residues 33–40, 80–84, 142–145, 208–215, 255–259, and 320–323 contribute to the GTP site; these read GRPNVGKS, DTGGW, NKVD, DTAGI, and NKWD. The KH-like domain occupies 376-458; that stretch reads TRVPTGRLNA…PIHISVRVRE (83 aa).

Belongs to the TRAFAC class TrmE-Era-EngA-EngB-Septin-like GTPase superfamily. EngA (Der) GTPase family. Associates with the 50S ribosomal subunit.

Its function is as follows. GTPase that plays an essential role in the late steps of ribosome biogenesis. In Streptomyces coelicolor (strain ATCC BAA-471 / A3(2) / M145), this protein is GTPase Der.